Here is a 345-residue protein sequence, read N- to C-terminus: UDP-N-acetylenolpyruvoylglucosamine reductase (345 aa).

An FAD-binding PCMH-type domain is found at Leu-16 to Ser-186. Arg-162 is an active-site residue. Residue Ser-232 is the Proton donor of the active site. Glu-328 is an active-site residue.

This sequence belongs to the MurB family. FAD serves as cofactor.

It is found in the cytoplasm. The catalysed reaction is UDP-N-acetyl-alpha-D-muramate + NADP(+) = UDP-N-acetyl-3-O-(1-carboxyvinyl)-alpha-D-glucosamine + NADPH + H(+). It functions in the pathway cell wall biogenesis; peptidoglycan biosynthesis. Cell wall formation. The sequence is that of UDP-N-acetylenolpyruvoylglucosamine reductase from Yersinia pestis.